We begin with the raw amino-acid sequence, 933 residues long: Isoleucine--tRNA ligase (933 aa).

Positions 57–67 (PYANGNIHVGH) match the 'HIGH' region motif. Residue glutamate 554 participates in L-isoleucyl-5'-AMP binding. The 'KMSKS' region motif lies at 595 to 599 (KMSKS). An ATP-binding site is contributed by lysine 598.

This sequence belongs to the class-I aminoacyl-tRNA synthetase family. IleS type 1 subfamily. In terms of assembly, monomer.

The protein resides in the cytoplasm. It carries out the reaction tRNA(Ile) + L-isoleucine + ATP = L-isoleucyl-tRNA(Ile) + AMP + diphosphate. Its function is as follows. Catalyzes the attachment of isoleucine to tRNA(Ile). As IleRS can inadvertently accommodate and process structurally similar amino acids such as valine, to avoid such errors it has two additional distinct tRNA(Ile)-dependent editing activities. One activity is designated as 'pretransfer' editing and involves the hydrolysis of activated Val-AMP. The other activity is designated 'posttransfer' editing and involves deacylation of mischarged Val-tRNA(Ile). The sequence is that of Isoleucine--tRNA ligase from Streptococcus pyogenes serotype M1.